A 224-amino-acid chain; its full sequence is LexA repressor (224 aa).

A DNA-binding region (H-T-H motif) is located at residues 31–51 (RAEIAAEFGFKSANAAEEHLQ). Active-site for autocatalytic cleavage activity residues include Ser142 and Lys179.

This sequence belongs to the peptidase S24 family. As to quaternary structure, homodimer.

The enzyme catalyses Hydrolysis of Ala-|-Gly bond in repressor LexA.. Represses a number of genes involved in the response to DNA damage (SOS response), including recA and lexA. In the presence of single-stranded DNA, RecA interacts with LexA causing an autocatalytic cleavage which disrupts the DNA-binding part of LexA, leading to derepression of the SOS regulon and eventually DNA repair. The sequence is that of LexA repressor from Paracidovorax citrulli (strain AAC00-1) (Acidovorax citrulli).